Here is a 587-residue protein sequence, read N- to C-terminus: Prolycopene isomerase 1, chloroplastic (587 aa).

The span at 1–13 (MLCLSLNSSSTSP) shows a compositional bias: low complexity. The disordered stretch occupies residues 1 to 21 (MLCLSLNSSSTSPPKSPLHHS). The transit peptide at 1–50 (MLCLSLNSSSTSPPKSPLHHSFSRRSMRSWVCSPRVQRKKLGFWSSPKAV) directs the protein to the chloroplast.

This sequence belongs to the carotenoid/retinoid oxidoreductase family. CrtISO subfamily. The cofactor is NAD(+). NADP(+) is required as a cofactor. It depends on FAD as a cofactor. In terms of tissue distribution, up-regulated in the flower buds and flower lip tissue, while it is weakly expressed in leaves.

Its subcellular location is the plastid. It is found in the chloroplast membrane. The enzyme catalyses 7,7',9,9'-tetra-cis-lycopene = all-trans-lycopene. It participates in carotenoid biosynthesis; lycopene biosynthesis. In terms of biological role, carotene cis-trans-isomerase that converts 7,9,9'-tri-cis-neurosporene to 9'-cis-neurosporene and 7,9,9',7'-tetra-cis-lycopene (also known as prolycopene) into all-trans-lycopene. Isomerization requires redox-active components, suggesting that isomerization is achieved by a reversible redox reaction acting at specific double bonds. Isomerizes adjacent cis-double bonds at C7 and C9 pairwise into the trans-configuration, but is incapable of isomerizing single cis-double bonds at C9 and C9'. This is Prolycopene isomerase 1, chloroplastic (CRTISO1) from Oncidium hybrid cultivar (Orchid).